The chain runs to 235 residues: 7-cyano-7-deazaguanine synthase (235 aa).

12–22 is a binding site for ATP; sequence FSGGQDSTACL. Cysteine 200, cysteine 215, cysteine 218, and cysteine 221 together coordinate Zn(2+).

The protein belongs to the QueC family. The cofactor is Zn(2+).

The enzyme catalyses 7-carboxy-7-deazaguanine + NH4(+) + ATP = 7-cyano-7-deazaguanine + ADP + phosphate + H2O + H(+). Its pathway is purine metabolism; 7-cyano-7-deazaguanine biosynthesis. Its function is as follows. Catalyzes the ATP-dependent conversion of 7-carboxy-7-deazaguanine (CDG) to 7-cyano-7-deazaguanine (preQ(0)). The polypeptide is 7-cyano-7-deazaguanine synthase (Methylibium petroleiphilum (strain ATCC BAA-1232 / LMG 22953 / PM1)).